The following is a 294-amino-acid chain: 4-hydroxy-tetrahydrodipicolinate synthase (294 aa).

Residue threonine 47 participates in pyruvate binding. Tyrosine 135 serves as the catalytic Proton donor/acceptor. Catalysis depends on lysine 163, which acts as the Schiff-base intermediate with substrate. Valine 205 contributes to the pyruvate binding site.

This sequence belongs to the DapA family. As to quaternary structure, homotetramer; dimer of dimers.

The protein resides in the cytoplasm. It catalyses the reaction L-aspartate 4-semialdehyde + pyruvate = (2S,4S)-4-hydroxy-2,3,4,5-tetrahydrodipicolinate + H2O + H(+). Its pathway is amino-acid biosynthesis; L-lysine biosynthesis via DAP pathway; (S)-tetrahydrodipicolinate from L-aspartate: step 3/4. In terms of biological role, catalyzes the condensation of (S)-aspartate-beta-semialdehyde [(S)-ASA] and pyruvate to 4-hydroxy-tetrahydrodipicolinate (HTPA). This is 4-hydroxy-tetrahydrodipicolinate synthase from Rickettsia bellii (strain OSU 85-389).